The following is a 90-amino-acid chain: Small ribosomal subunit protein uS15c (90 aa).

This sequence belongs to the universal ribosomal protein uS15 family. As to quaternary structure, part of the 30S ribosomal subunit.

Its subcellular location is the plastid. It is found in the chloroplast. This is Small ribosomal subunit protein uS15c (rps15) from Piper cenocladum (Ant piper).